We begin with the raw amino-acid sequence, 305 residues long: MNLFSNGVDVGRRRQAFKAALAAPHIARLPGAFSPLIARSIEEAGFEGVYVSGAVIAADLALPDIGLTTLTEVAHRARQIARVTDLGVLVDADTGFGEPMSAARTVAELEDAGVAGCHLEDQVNPKRCGHLDGKEVVRTDVMVRRIAAAVSARRDPNFVICARTDAAGVEGIDAAIERAKAYLDAGADMIFTEALHSEADFRYFRHAIPDALLLANMTEFGKTTLLSADVLEEIGYNAVIYPVTTLRIAMGQVEQALAEIKEHGTQEGWLDRMQHRSRLYELLRYEDYNVFDQHIFTYRKGENNE.

52-54 contributes to the substrate binding site; sequence SGA. The Mg(2+) site is built by aspartate 91 and aspartate 93. Residues 128-129, arginine 163, glutamate 193, 216-218, arginine 247, and arginine 276 contribute to the substrate site; these read CG and NMT.

Belongs to the isocitrate lyase/PEP mutase superfamily. Methylisocitrate lyase family. As to quaternary structure, homotetramer; dimer of dimers. Mg(2+) serves as cofactor.

The enzyme catalyses (2S,3R)-3-hydroxybutane-1,2,3-tricarboxylate = pyruvate + succinate. Its function is as follows. Catalyzes the thermodynamically favored C-C bond cleavage of (2R,3S)-2-methylisocitrate to yield pyruvate and succinate via an alpha-carboxy-carbanion intermediate. The polypeptide is Probable 2-methylisocitrate lyase 1 (Corynebacterium glutamicum (strain ATCC 13032 / DSM 20300 / JCM 1318 / BCRC 11384 / CCUG 27702 / LMG 3730 / NBRC 12168 / NCIMB 10025 / NRRL B-2784 / 534)).